We begin with the raw amino-acid sequence, 356 residues long: 7,8-didemethyl-8-hydroxy-5-deazariboflavin synthase (356 aa).

Residues 40–280 (ITYSKNVFIP…KDISIQVPPN (241 aa)) form the Radical SAM core domain. Cysteine 54, cysteine 58, and cysteine 61 together coordinate [4Fe-4S] cluster.

The protein belongs to the radical SAM superfamily. CofG family. In terms of assembly, consists of two subunits, CofG and CofH. It depends on [4Fe-4S] cluster as a cofactor.

The catalysed reaction is 5-amino-5-(4-hydroxybenzyl)-6-(D-ribitylimino)-5,6-dihydrouracil + S-adenosyl-L-methionine = 7,8-didemethyl-8-hydroxy-5-deazariboflavin + 5'-deoxyadenosine + L-methionine + NH4(+) + H(+). It functions in the pathway cofactor biosynthesis; coenzyme F0 biosynthesis. Its function is as follows. Catalyzes the radical-mediated synthesis of 7,8-didemethyl-8-hydroxy-5-deazariboflavin from 5-amino-5-(4-hydroxybenzyl)-6-(D-ribitylimino)-5,6-dihydrouracil. The polypeptide is 7,8-didemethyl-8-hydroxy-5-deazariboflavin synthase (Methanococcus aeolicus (strain ATCC BAA-1280 / DSM 17508 / OCM 812 / Nankai-3)).